The primary structure comprises 413 residues: Serine/threonine-protein phosphatase 2A 55 kDa regulatory subunit B beta isoform (413 aa).

4 WD repeats span residues 1 to 31 (EFNHTGELLATGDKGGRVVIFQREQESKNQV), 57 to 98 (EIEE…KRPE), 141 to 179 (AHTYHINSISVNSDYETYMSADDLRINLWNFEITNQSFN), and 190 to 230 (ELTE…LCDR). Ser-245 carries the phosphoserine modification. WD repeat units follow at residues 249-287 (EIISSISDVKFSHSGRYIMTRDYLTVKVWDLNMENRPIE), 304-345 (ENDC…DVTL), and 380-412 (DFSKKILHTAWHPSENIIAVAATNNLYIFQDKV). Residue Tyr-265 is modified to Phosphotyrosine. Thr-268 carries the phosphothreonine modification.

This sequence belongs to the phosphatase 2A regulatory subunit B family. As to quaternary structure, PP2A consists of a common heterodimeric core enzyme, composed of a 36 kDa catalytic subunit (subunit C) and a 65 kDa constant regulatory subunit (PR65 or subunit A), that associates with a variety of regulatory subunits. Proteins that associate with the core dimer include three families of regulatory subunits B (the R2/B/PR55/B55, R3/B''/PR72/PR130/PR59 and R5/B'/B56 families), the 48 kDa variable regulatory subunit, viral proteins, and cell signaling molecules. Interacts with TOMM22. Interacts with IER5 (via N- and C-terminal regions). As to expression, brain.

It is found in the cytoplasm. The protein localises to the cytoskeleton. The protein resides in the membrane. Its function is as follows. The B regulatory subunit might modulate substrate selectivity and catalytic activity, and might also direct the localization of the catalytic enzyme to a particular subcellular compartment. In Oryctolagus cuniculus (Rabbit), this protein is Serine/threonine-protein phosphatase 2A 55 kDa regulatory subunit B beta isoform (PPP2R2B).